The primary structure comprises 1109 residues: Ankyrin repeat- and BTB/POZ domain-containing protein 3 (1109 aa).

Residues 168-188 (IVLSWGLAAHCTAAALAALSL) form a helical membrane-spanning segment. A disordered region spans residues 260–302 (SCSGPGPGSSSGSGPGPGSGPGAPAADKERETPGGGAASGGPC). The span at 264-280 (PGPGSSSGSGPGPGSGP) shows a compositional bias: gly residues. ANK repeat units follow at residues 608-637 (QGMT…DLNV), 654-683 (RHWT…KVEG), 692-721 (YSET…DPLI), 735-764 (GDMN…KEKS), and 830-859 (TWLE…TIQE). The BTB domain maps to 928 to 994 (SDVTFLVEGR…LYYGGPESLL (67 aa)).

It localises to the membrane. The chain is Ankyrin repeat- and BTB/POZ domain-containing protein 3 (Abtb3) from Mus musculus (Mouse).